Reading from the N-terminus, the 519-residue chain is Cytochrome P450 52E1 (519 aa).

Helical transmembrane passes span 10–30 (ALGGIALSFLVAYQFIYFYFI) and 44–64 (VIVFSFPLGLPALYKFATAML). C479 provides a ligand contact to heme.

The protein belongs to the cytochrome P450 family. The cofactor is heme.

It localises to the membrane. In terms of biological role, together with an NADPH cytochrome P450 the enzyme system catalyzes the terminal hydroxylation as the first step in the assimilation of alkanes and fatty acids. This Candida apicola (Yeast) protein is Cytochrome P450 52E1 (CYP52E1).